The primary structure comprises 539 residues: Neutral amino acid transporter B(0) (539 aa).

M1 carries the post-translational modification N-acetylmethionine. At M1–A52 the chain is on the cytoplasmic side. The chain crosses the membrane as a helical span at residues N53–L82. The Extracellular segment spans residues G83–E95. Residues L96–A117 form a helical membrane-spanning segment. Residues A118–W131 lie on the Cytoplasmic side of the membrane. The chain crosses the membrane as a helical span at residues A132 to L154. Over Q155–G223 the chain is Extracellular. Residues N164 and N213 are each glycosylated (N-linked (GlcNAc...) asparagine). The chain crosses the membrane as a helical span at residues E224–L247. Residues G248–R256 lie on the Cytoplasmic side of the membrane. A helical transmembrane segment spans residues F257 to V284. The Extracellular segment spans residues A285–I305. The chain crosses the membrane as a helical span at residues L306–F327. The Cytoplasmic segment spans residues A328–P332. The discontinuously helical intramembrane region spans Y333 to V363. At E364–H372 the chain is on the cytoplasmic side. The chain crosses the membrane as a helical span at residues I373–F399. The Na(+) site is built by G381, T383, and N385. Residues I400–K412 are Extracellular-facing. Residues I413 to N446 constitute an intramembrane region (discontinuously helical). The Extracellular segment spans residues L447–D459. Residues W460–L481 form a helical membrane-spanning segment. The Na(+) site is built by N470 and D474. Residues Q482–M539 lie on the Cytoplasmic side of the membrane. S493, S502, and S537 each carry phosphoserine. Positions P518–M539 are disordered.

This sequence belongs to the dicarboxylate/amino acid:cation symporter (DAACS) (TC 2.A.23) family. SLC1A5 subfamily. As to quaternary structure, homotrimer.

The protein localises to the cell membrane. The protein resides in the melanosome. The enzyme catalyses L-glutamine(out) + L-serine(in) + Na(+)(out) = L-glutamine(in) + L-serine(out) + Na(+)(in). It carries out the reaction L-glutamine(in) + L-serine(out) + Na(+)(out) = L-glutamine(out) + L-serine(in) + Na(+)(in). It catalyses the reaction L-threonine(in) + L-glutamine(out) + Na(+)(out) = L-threonine(out) + L-glutamine(in) + Na(+)(in). The catalysed reaction is L-threonine(out) + L-glutamine(in) + Na(+)(out) = L-threonine(in) + L-glutamine(out) + Na(+)(in). The enzyme catalyses L-asparagine(in) + L-glutamine(out) + Na(+)(out) = L-asparagine(out) + L-glutamine(in) + Na(+)(in). It carries out the reaction L-asparagine(out) + L-glutamine(in) + Na(+)(out) = L-asparagine(in) + L-glutamine(out) + Na(+)(in). It catalyses the reaction L-glutamine(in) + L-alanine(out) + Na(+)(out) = L-glutamine(out) + L-alanine(in) + Na(+)(in). The catalysed reaction is L-valine(out) + L-glutamine(in) + Na(+)(out) = L-valine(in) + L-glutamine(out) + Na(+)(in). The enzyme catalyses L-glutamine(in) + L-methionine(out) + Na(+)(out) = L-glutamine(out) + L-methionine(in) + Na(+)(in). It carries out the reaction L-glutamine(in) + L-glutamate(out) + Na(+)(out) + H(+)(out) = L-glutamine(out) + L-glutamate(in) + Na(+)(in) + H(+)(in). It catalyses the reaction D-serine(in) + L-glutamine(out) + Na(+)(out) = D-serine(out) + L-glutamine(in) + Na(+)(in). The catalysed reaction is D-serine(in) + L-alanine(out) + Na(+)(out) = D-serine(out) + L-alanine(in) + Na(+)(in). The enzyme catalyses nitrate(in) = nitrate(out). It carries out the reaction iodide(out) = iodide(in). It catalyses the reaction thiocyanate(in) = thiocyanate(out). Sodium-coupled antiporter of neutral amino acids. In a tri-substrate transport cycle, exchanges neutral amino acids between the extracellular and intracellular compartments, coupled to the inward cotransport of at least one sodium ion. The preferred substrate is the essential amino acid L-glutamine, a precursor for biosynthesis of proteins, nucleotides and amine sugars as well as an alternative fuel for mitochondrial oxidative phosphorylation. Exchanges L-glutamine with other neutral amino acids such as L-serine, L-threonine and L-asparagine in a bidirectional way. Provides L-glutamine to proliferating stem and activated cells driving the metabolic switch toward cell differentiation. The transport cycle is usually pH-independent, with the exception of L-glutamate. Transports extracellular L-glutamate coupled to the cotransport of one proton and one sodium ion in exchange for intracellular L-glutamine counter-ion. May provide for L-glutamate uptake in glial cells regulating glutamine/glutamate cycle in the nervous system. Can transport D-amino acids. Mediates D-serine release from the retinal glia potentially affecting NMDA receptor function in retinal neurons. Displays sodium- and amino acid-dependent but uncoupled channel-like anion conductance with a preference SCN(-) &gt;&gt; NO3(-) &gt; I(-) &gt; Cl(-). Through binding of the fusogenic protein syncytin-1/ERVW-1 may mediate trophoblasts syncytialization, the spontaneous fusion of their plasma membranes, an essential process in placental development. The protein is Neutral amino acid transporter B(0) (SLC1A5) of Bos taurus (Bovine).